Reading from the N-terminus, the 257-residue chain is Thiazole synthase (257 aa).

Lys96 (schiff-base intermediate with DXP) is an active-site residue. 1-deoxy-D-xylulose 5-phosphate-binding positions include Gly157, 184–185 (AG), and 206–207 (NT).

The protein belongs to the ThiG family. As to quaternary structure, homotetramer. Forms heterodimers with either ThiH or ThiS.

It localises to the cytoplasm. It carries out the reaction [ThiS sulfur-carrier protein]-C-terminal-Gly-aminoethanethioate + 2-iminoacetate + 1-deoxy-D-xylulose 5-phosphate = [ThiS sulfur-carrier protein]-C-terminal Gly-Gly + 2-[(2R,5Z)-2-carboxy-4-methylthiazol-5(2H)-ylidene]ethyl phosphate + 2 H2O + H(+). Its pathway is cofactor biosynthesis; thiamine diphosphate biosynthesis. Catalyzes the rearrangement of 1-deoxy-D-xylulose 5-phosphate (DXP) to produce the thiazole phosphate moiety of thiamine. Sulfur is provided by the thiocarboxylate moiety of the carrier protein ThiS. In vitro, sulfur can be provided by H(2)S. The chain is Thiazole synthase from Rhizobium etli (strain ATCC 51251 / DSM 11541 / JCM 21823 / NBRC 15573 / CFN 42).